A 161-amino-acid chain; its full sequence is Allophycocyanin beta chain (161 aa).

Asn-71 carries the post-translational modification N4-methylasparagine. Cys-81 lines the (2R,3E)-phycocyanobilin pocket.

The protein belongs to the phycobiliprotein family. As to quaternary structure, heterodimer of an alpha and a beta chain. Contains one covalently linked phycocyanobilin chromophore.

It is found in the plastid. The protein localises to the chloroplast thylakoid membrane. Its function is as follows. Light-harvesting photosynthetic bile pigment-protein from the phycobiliprotein complex. Allophycocyanin has a maximum absorption at approximately 650 nanometers. The sequence is that of Allophycocyanin beta chain (apcB) from Porphyra purpurea (Red seaweed).